The chain runs to 259 residues: Flagellar L-ring protein (259 aa).

Residues 1-15 (MKRISLIALVTLMSG) form the signal peptide. A lipid anchor (N-palmitoyl cysteine) is attached at Cys16. The S-diacylglycerol cysteine moiety is linked to residue Cys16.

Belongs to the FlgH family. The basal body constitutes a major portion of the flagellar organelle and consists of four rings (L,P,S, and M) mounted on a central rod.

The protein localises to the cell outer membrane. The protein resides in the bacterial flagellum basal body. Its function is as follows. Assembles around the rod to form the L-ring and probably protects the motor/basal body from shearing forces during rotation. This is Flagellar L-ring protein from Vibrio vulnificus (strain YJ016).